The chain runs to 417 residues: Serine hydroxymethyltransferase (417 aa).

Residues Leu-121 and 125-127 (GHL) contribute to the (6S)-5,6,7,8-tetrahydrofolate site. Lys-229 bears the N6-(pyridoxal phosphate)lysine mark. (6S)-5,6,7,8-tetrahydrofolate is bound at residue 355–357 (SPF).

The protein belongs to the SHMT family. In terms of assembly, homodimer. Pyridoxal 5'-phosphate is required as a cofactor.

It is found in the cytoplasm. It catalyses the reaction (6R)-5,10-methylene-5,6,7,8-tetrahydrofolate + glycine + H2O = (6S)-5,6,7,8-tetrahydrofolate + L-serine. It functions in the pathway one-carbon metabolism; tetrahydrofolate interconversion. Its pathway is amino-acid biosynthesis; glycine biosynthesis; glycine from L-serine: step 1/1. Functionally, catalyzes the reversible interconversion of serine and glycine with tetrahydrofolate (THF) serving as the one-carbon carrier. This reaction serves as the major source of one-carbon groups required for the biosynthesis of purines, thymidylate, methionine, and other important biomolecules. Also exhibits THF-independent aldolase activity toward beta-hydroxyamino acids, producing glycine and aldehydes, via a retro-aldol mechanism. The chain is Serine hydroxymethyltransferase from Shewanella frigidimarina (strain NCIMB 400).